A 105-amino-acid polypeptide reads, in one-letter code: MGCCPGDCFTCCTQEQNCCEECCCQPGCCGCCGSCCGCGGSGCGGSGCGGSCCGSSCCGSGCGGCGGCGGCGGGCCGSSCCGSSCCGSGCCGPVCCQPTPICDTK.

Interacts with hair keratins.

In the hair cortex, hair keratin intermediate filaments are embedded in an interfilamentous matrix, consisting of hair keratin-associated proteins (KRTAP), which are essential for the formation of a rigid and resistant hair shaft through their extensive disulfide bond cross-linking with abundant cysteine residues of hair keratins. The matrix proteins include the high-sulfur and high-glycine-tyrosine keratins. The sequence is that of Keratin-associated protein 17-1 (KRTAP17-1) from Homo sapiens (Human).